The chain runs to 354 residues: Trans-enoyl reductase pydC (354 aa).

Positions 16 to 342 (ANTDPVTFEI…RREVSGEKIV (327 aa)) constitute an Enoyl reductase (ER) domain. NADP(+) is bound by residues 51–54 (CDYK), 180–183 (SPKN), Tyr198, 245–246 (FE), and 336–337 (VS).

This sequence belongs to the zinc-containing alcohol dehydrogenase family. Monomer.

The protein operates within mycotoxin biosynthesis. Its function is as follows. Trans-enoyl reductase; part of the gene cluster that mediates the biosynthesis of pyrrocidines, fungal natural products containing a macrocyclic para-cyclophane connected to a decahydrofluorene ring system that show potent antibiotic activities toward Gram-negative bacteria. Within the pathway, the PKS-NRPS pydA, with the help of the trans-enoyl reductase pydC, synthesize the polyketide-tyrosyl acyl thioester product which can be reductively off-loaded by the terminal reductase (R) domain in pydA. The PKS module of pydA acts in combination with the trans-acting enoyl reductase pydC to produce a methylated polyketide attached to the ACP domain. In parallel, the adenylation (A) domain of the NRPS module activated L-tyrosine, which is then transferred to the ACP domain. The condensation (C) domain subsequently link this group to the polyketide chain, forming an enzyme-bound amide. The alpha/beta hydrolase pydG is then required to catalyze the subsequent Knoevenagel condensation that affords the 3-pyrrolin-2-one ring, whereas the four proteins pydB, pydE, pydX and pydZ then function synergistically to form the cyclophane. PydB and the membrane-bound pydX and pydZ are lipid-binding proteins that can sequester and mold the pdyG product into the inverse S-shape. Binding of the medium chain reductase pydE to the complex would trigger the cascade oxidative cyclization. PydY is involved in the Diels-Alder cycloaddition that forms the decahydrofluorene core. Additional non-enzymatic hydroxylation yields pyrrocidine A2 which can be further reduced into pyrrocidine B by an endogenous reductase. This Acremonium sp protein is Trans-enoyl reductase pydC.